We begin with the raw amino-acid sequence, 256 residues long: Dihydroorotate dehydrogenase B (NAD(+)), electron transfer subunit (256 aa).

Positions 2 to 100 constitute an FAD-binding FR-type domain; sequence IRLETMKVVA…MGPQGNGFDL (99 aa). Residues 51–54, 68–70, and 75–76 contribute to the FAD site; these read RPIS, IYR, and GT. 4 residues coordinate [2Fe-2S] cluster: cysteine 220, cysteine 225, cysteine 228, and cysteine 243.

Belongs to the PyrK family. As to quaternary structure, heterotetramer of 2 PyrK and 2 PyrD type B subunits. It depends on [2Fe-2S] cluster as a cofactor. The cofactor is FAD.

The protein operates within pyrimidine metabolism; UMP biosynthesis via de novo pathway; orotate from (S)-dihydroorotate (NAD(+) route): step 1/1. Its function is as follows. Responsible for channeling the electrons from the oxidation of dihydroorotate from the FMN redox center in the PyrD type B subunit to the ultimate electron acceptor NAD(+). The protein is Dihydroorotate dehydrogenase B (NAD(+)), electron transfer subunit of Streptococcus pneumoniae (strain ATCC BAA-255 / R6).